The sequence spans 316 residues: Biotin synthase (316 aa).

The 229-residue stretch at 36–264 folds into the Radical SAM core domain; it reads FDNRITLCAI…TATLRICGGR (229 aa). 3 residues coordinate [4Fe-4S] cluster: C53, C57, and C60. C129, C189, and R259 together coordinate [2Fe-2S] cluster.

It belongs to the radical SAM superfamily. Biotin synthase family. As to quaternary structure, homodimer. [4Fe-4S] cluster is required as a cofactor. It depends on [2Fe-2S] cluster as a cofactor.

It catalyses the reaction (4R,5S)-dethiobiotin + (sulfur carrier)-SH + 2 reduced [2Fe-2S]-[ferredoxin] + 2 S-adenosyl-L-methionine = (sulfur carrier)-H + biotin + 2 5'-deoxyadenosine + 2 L-methionine + 2 oxidized [2Fe-2S]-[ferredoxin]. It functions in the pathway cofactor biosynthesis; biotin biosynthesis; biotin from 7,8-diaminononanoate: step 2/2. In terms of biological role, catalyzes the conversion of dethiobiotin (DTB) to biotin by the insertion of a sulfur atom into dethiobiotin via a radical-based mechanism. This chain is Biotin synthase, found in Desulfovibrio desulfuricans (strain ATCC 27774 / DSM 6949 / MB).